The chain runs to 383 residues: Chaperone protein DnaJ (383 aa).

The region spanning 5–69 (DYYDILGVSK…QKRAQYDQFG (65 aa)) is the J domain. The segment at 138–222 (GKTTTIKYDR…CHGAGHVHER (85 aa)) adopts a CR-type zinc-finger fold. Zn(2+)-binding residues include Cys151, Cys154, Cys168, Cys171, Cys194, Cys197, Cys210, and Cys213. 4 CXXCXGXG motif repeats span residues 151 to 158 (CKTCHGTG), 168 to 175 (CPRCHGAG), 194 to 201 (CPECNGTG), and 210 to 217 (CDTCHGAG).

This sequence belongs to the DnaJ family. In terms of assembly, homodimer. The cofactor is Zn(2+).

It localises to the cytoplasm. Functionally, participates actively in the response to hyperosmotic and heat shock by preventing the aggregation of stress-denatured proteins and by disaggregating proteins, also in an autonomous, DnaK-independent fashion. Unfolded proteins bind initially to DnaJ; upon interaction with the DnaJ-bound protein, DnaK hydrolyzes its bound ATP, resulting in the formation of a stable complex. GrpE releases ADP from DnaK; ATP binding to DnaK triggers the release of the substrate protein, thus completing the reaction cycle. Several rounds of ATP-dependent interactions between DnaJ, DnaK and GrpE are required for fully efficient folding. Also involved, together with DnaK and GrpE, in the DNA replication of plasmids through activation of initiation proteins. The chain is Chaperone protein DnaJ from Limosilactobacillus reuteri (strain DSM 20016) (Lactobacillus reuteri).